Consider the following 451-residue polypeptide: Phosphoglucosamine mutase (451 aa).

Ser102 acts as the Phosphoserine intermediate in catalysis. Mg(2+) is bound by residues Ser102, Asp243, Asp245, and Asp247. Ser102 is modified (phosphoserine).

Belongs to the phosphohexose mutase family. Mg(2+) serves as cofactor. In terms of processing, activated by phosphorylation.

It carries out the reaction alpha-D-glucosamine 1-phosphate = D-glucosamine 6-phosphate. Catalyzes the conversion of glucosamine-6-phosphate to glucosamine-1-phosphate. This is Phosphoglucosamine mutase from Brucella canis (strain ATCC 23365 / NCTC 10854 / RM-666).